The following is a 158-amino-acid chain: Protein-export protein SecB (158 aa).

Belongs to the SecB family. Homotetramer, a dimer of dimers. One homotetramer interacts with 1 SecA dimer.

The protein localises to the cytoplasm. Its function is as follows. One of the proteins required for the normal export of preproteins out of the cell cytoplasm. It is a molecular chaperone that binds to a subset of precursor proteins, maintaining them in a translocation-competent state. It also specifically binds to its receptor SecA. The chain is Protein-export protein SecB from Photorhabdus laumondii subsp. laumondii (strain DSM 15139 / CIP 105565 / TT01) (Photorhabdus luminescens subsp. laumondii).